A 164-amino-acid polypeptide reads, in one-letter code: MSSCPVHDCPSWDPERLEPVETGSRGALRLRGGAPGSAAGFRASIWGPAGYPSPVGLGHPASLPRPAYSPRCPEPDARHGWGSGSNAGYRGPDRAGRTPCPAQDREGRSSSPVPPPRLKAMTSQARKQNGGALIDTVDWTREAPDSDPVMSMQKTQKPQTTVGQ.

The segment at 1 to 164 (MSSCPVHDCP…TQKPQTTVGQ (164 aa)) is disordered. Positions 23–40 (GSRGALRLRGGAPGSAAG) are enriched in low complexity. The segment covering 152–164 (MQKTQKPQTTVGQ) has biased composition (polar residues).

This is Putative lung carcinoma-associated protein 10 (LCA10) from Homo sapiens (Human).